An 887-amino-acid chain; its full sequence is Alanine--tRNA ligase (887 aa).

Zn(2+) is bound by residues H573, H577, C676, and H680.

The protein belongs to the class-II aminoacyl-tRNA synthetase family. The cofactor is Zn(2+).

Its subcellular location is the cytoplasm. The enzyme catalyses tRNA(Ala) + L-alanine + ATP = L-alanyl-tRNA(Ala) + AMP + diphosphate. Catalyzes the attachment of alanine to tRNA(Ala) in a two-step reaction: alanine is first activated by ATP to form Ala-AMP and then transferred to the acceptor end of tRNA(Ala). Also edits incorrectly charged Ser-tRNA(Ala) and Gly-tRNA(Ala) via its editing domain. The polypeptide is Alanine--tRNA ligase (Corynebacterium jeikeium (strain K411)).